Consider the following 294-residue polypeptide: 33 kDa chaperonin (294 aa).

2 disulfide bridges follow: C239-C241 and C272-C275.

The protein belongs to the HSP33 family. Under oxidizing conditions two disulfide bonds are formed involving the reactive cysteines. Under reducing conditions zinc is bound to the reactive cysteines and the protein is inactive.

It localises to the cytoplasm. Functionally, redox regulated molecular chaperone. Protects both thermally unfolding and oxidatively damaged proteins from irreversible aggregation. Plays an important role in the bacterial defense system toward oxidative stress. The sequence is that of 33 kDa chaperonin from Listeria monocytogenes serotype 4a (strain HCC23).